The chain runs to 370 residues: Protein-tyrosine sulfotransferase 1 (370 aa).

The Cytoplasmic segment spans residues 1 to 8; that stretch reads MVGKLKQN. Residues 9 to 25 form a helical; Signal-anchor for type II membrane protein membrane-spanning segment; sequence LLLACLVISSVTVFYLG. The Lumenal portion of the chain corresponds to 26–370; the sequence is QHAMECHHRI…KEKPQTEQVE (345 aa). Asn-60 carries an N-linked (GlcNAc...) asparagine glycan. 79-83 lines the 3'-phosphoadenylyl sulfate pocket; sequence RSGTT. Cys-97 and Cys-157 form a disulfide bridge. The Proton donor/acceptor role is filled by Glu-100. Residues 102-106 are interaction with peptide substrate; that stretch reads RVIPR. Positions 184, 192, and 196 each coordinate 3'-phosphoadenylyl sulfate. Residues Cys-226 and Cys-234 are joined by a disulfide bond. Tyr-239 lines the 3'-phosphoadenylyl sulfate pocket. N-linked (GlcNAc...) asparagine glycosylation is present at Asn-262. Residues 286–295 and Lys-301 each bind 3'-phosphoadenylyl sulfate; that span reads STDQVIKPVN.

It belongs to the protein sulfotransferase family. In terms of assembly, homodimer. Can also form heterodimers with TPST2. In terms of processing, N-glycosylated.

The protein resides in the golgi apparatus membrane. The enzyme catalyses L-tyrosyl-[protein] + 3'-phosphoadenylyl sulfate = O-sulfo-L-tyrosine-[protein] + adenosine 3',5'-bisphosphate + H(+). Functionally, catalyzes the O-sulfation of tyrosine residues within acidic motifs of polypeptides, using 3'-phosphoadenylyl sulfate (PAPS) as cosubstrate. The sequence is that of Protein-tyrosine sulfotransferase 1 (Tpst1) from Rattus norvegicus (Rat).